The following is an 877-amino-acid chain: Neurotrypsin (877 aa).

A signal peptide spans 1-20 (MTLARFVLALVLGALPEVVS). Residue Asn26 is glycosylated (N-linked (GlcNAc...) asparagine). The segment at 31–90 (HRHRHRHSPPPGLQYPYYLPTQQRPPRTRPPPPLPRFPRPPRALPAQRPHALQAGHTPRP) is disordered. Residues 44-55 (QYPYYLPTQQRP) are compositionally biased toward low complexity. Pro residues predominate over residues 58 to 73 (TRPPPPLPRFPRPPRA). The region spanning 95–167 (CPAGEPWVSV…GKVDWGYCDC (73 aa)) is the Kringle domain. Cystine bridges form between Cys95/Cys167, Cys111/Cys151, Cys140/Cys165, Cys197/Cys261, Cys210/Cys271, Cys241/Cys251, Cys307/Cys371, Cys320/Cys381, Cys351/Cys361, Cys414/Cys477, Cys427/Cys487, Cys457/Cys467, Cys527/Cys591, Cys540/Cys601, Cys571/Cys581, Cys621/Cys752, Cys663/Cys679, Cys767/Cys833, Cys796/Cys810, and Cys823/Cys852. 4 SRCR domains span residues 172 to 273 (VRLR…TCSF), 282 to 383 (IRLV…SCTP), 389 to 489 (IRLA…ACYP), and 502 to 603 (VRLM…ICDY). The interval 621–632 (CGLRLLHRRQKR) is zymogen activation region. Residues 633–876 (IIGGKNSLRG…FVPWIKSVTK (244 aa)) enclose the Peptidase S1 domain. His678 serves as the catalytic Charge relay system. A glycan (N-linked (GlcNAc...) asparagine) is linked at Asn685. The Charge relay system role is filled by Asp728. Ser827 acts as the Charge relay system in catalysis.

Belongs to the peptidase S1 family.

It localises to the secreted. In terms of biological role, plays a role in neuronal plasticity and the proteolytic action may subserve structural reorganizations associated with learning and memory operations. The chain is Neurotrypsin (PRSS12) from Pongo pygmaeus (Bornean orangutan).